A 159-amino-acid chain; its full sequence is Large ribosomal subunit protein uL30 (159 aa).

The protein belongs to the universal ribosomal protein uL30 family. Part of the 50S ribosomal subunit.

This is Large ribosomal subunit protein uL30 from Ignicoccus hospitalis (strain KIN4/I / DSM 18386 / JCM 14125).